The primary structure comprises 89 residues: Small ribosomal subunit protein uS17 (89 aa).

The protein belongs to the universal ribosomal protein uS17 family. As to quaternary structure, part of the 30S ribosomal subunit.

In terms of biological role, one of the primary rRNA binding proteins, it binds specifically to the 5'-end of 16S ribosomal RNA. This chain is Small ribosomal subunit protein uS17, found in Xylella fastidiosa (strain M12).